We begin with the raw amino-acid sequence, 627 residues long: 1-deoxy-D-xylulose-5-phosphate synthase (627 aa).

Thiamine diphosphate contacts are provided by residues His-87 and 128 to 130 (GHS). A Mg(2+)-binding site is contributed by Asp-159. Thiamine diphosphate contacts are provided by residues 160–161 (GA), Asn-188, Phe-295, and Glu-375. Residue Asn-188 coordinates Mg(2+).

The protein belongs to the transketolase family. DXPS subfamily. As to quaternary structure, homodimer. The cofactor is Mg(2+). Requires thiamine diphosphate as cofactor.

It catalyses the reaction D-glyceraldehyde 3-phosphate + pyruvate + H(+) = 1-deoxy-D-xylulose 5-phosphate + CO2. It participates in metabolic intermediate biosynthesis; 1-deoxy-D-xylulose 5-phosphate biosynthesis; 1-deoxy-D-xylulose 5-phosphate from D-glyceraldehyde 3-phosphate and pyruvate: step 1/1. In terms of biological role, catalyzes the acyloin condensation reaction between C atoms 2 and 3 of pyruvate and glyceraldehyde 3-phosphate to yield 1-deoxy-D-xylulose-5-phosphate (DXP). This Pseudomonas aeruginosa (strain LESB58) protein is 1-deoxy-D-xylulose-5-phosphate synthase.